Consider the following 73-residue polypeptide: Sec-independent protein translocase protein TatA (73 aa).

A helical transmembrane segment spans residues 1–21 (MGLSWQQLLILLLVVVVIFGT).

Belongs to the TatA/E family. As to quaternary structure, the Tat system comprises two distinct complexes: a TatABC complex, containing multiple copies of TatA, TatB and TatC subunits, and a separate TatA complex, containing only TatA subunits. Substrates initially bind to the TatABC complex, which probably triggers association of the separate TatA complex to form the active translocon.

It localises to the cell inner membrane. In terms of biological role, part of the twin-arginine translocation (Tat) system that transports large folded proteins containing a characteristic twin-arginine motif in their signal peptide across membranes. TatA could form the protein-conducting channel of the Tat system. This Histophilus somni (strain 129Pt) (Haemophilus somnus) protein is Sec-independent protein translocase protein TatA.